A 915-amino-acid polypeptide reads, in one-letter code: Protein ZDS1 (915 aa).

Disordered stretches follow at residues 1–28, 69–134, 179–261, 310–330, 412–433, and 464–807; these read MSNRDNESMLRTTSSDKAIASQRDKRKS, GESS…KKGV, LSDN…SETV, GSYSDKKDQPQPEGHYDEGDI, KSPFRQQDEDSENMSSPGSIGD, and KVRN…SILP. The segment covering 74-93 has biased composition (low complexity); sequence RRSWSGTTSSSASMPSDTTT. Positions 115-125 are enriched in polar residues; it reads GIESSNKTKQG. Positions 202 to 212 are enriched in basic and acidic residues; sequence DKESQSYENKE. The residue at position 229 (serine 229) is a Phosphoserine. Acidic residues predominate over residues 243-252; sequence EFDDNEDDDN. Positions 313–327 are enriched in basic and acidic residues; that stretch reads SDKKDQPQPEGHYDE. Over residues 464–480 the composition is skewed to basic and acidic residues; it reads KVRNDTVEQDLELREGT. Over residues 515-530 the composition is skewed to acidic residues; the sequence is DDNEENQGDDENEENV. Basic and acidic residues-rich tracts occupy residues 531–541 and 552–562; these read DSQRMELDNSK and EKTEVSNKEEM. 2 stretches are compositionally biased toward low complexity: residues 565-574 and 597-609; these read SSTSTATSQT and SSSPSSSPSSSPS. Composition is skewed to basic residues over residues 618-627 and 642-656; these read VRVRKSKKLG and NRPRPHRHHHSRHGS. Positions 668 to 679 are enriched in low complexity; sequence QPQQQIPLQPQL. Positions 696 to 710 are enriched in polar residues; that stretch reads LPQLQPAVSVSSTKS. 2 stretches are compositionally biased toward basic and acidic residues: residues 711 to 721 and 742 to 751; these read NSRDREEEEAK and VQKENTDEQK. Polar residues predominate over residues 752–793; the sequence is AQLQAPAQEQVQTSVPVQASAPVQNSAPVQTSAPVEASAQTQ.

This sequence to yeast ZDS2/MCS1. As to quaternary structure, interacts with BCY1, DBP5, GFD1 and SKG6.

The protein resides in the cytoplasm. Has a role in establishing cell polarity. Together with cAMP-dependent protein kinase regulatory subunit BCY1, provides a negative feedback control on the cell wall integrity-signaling pathway by acting as a negative regulator of MAP kinase SLT2/MPK1. In heat-stressed cells appears to play a role in localizing BCY1 to the cytoplasm. Seems to interact with, and down-regulate, CDC42. Also acts as a suppressor of PKC1. May act as an integration point for distinct signaling pathways helping to maintain a balance among these different pathways. Its function is as follows. When associated with DBP5, GFD1 and nucleoporins at the cytosolic fibrils of the nuclear pore complex, is required for mRNA export form the nucleus. This Saccharomyces cerevisiae (strain ATCC 204508 / S288c) (Baker's yeast) protein is Protein ZDS1 (ZDS1).